Here is a 2240-residue protein sequence, read N- to C-terminus: Nonribisomal peptide synthetase notE (2240 aa).

Residues 22–52 (TETMRETLSSSSSPLSLSSITSPLSSASEPP) are disordered. A compositionally biased stretch (low complexity) spans 28–52 (TLSSSSSPLSLSSITSPLSSASEPP). The segment at 85 to 484 (QQRCREAPES…GRKEGQVKIR (400 aa)) is adenylation 1. The Carrier 1 domain occupies 616–692 (PPTTATEHAL…EQARKATPVS (77 aa)). Serine 653 is subject to O-(pantetheine 4'-phosphoryl)serine. A condensation 1 region spans residues 732–1144 (EDIFPCTPLQ…DFASPQDRDL (413 aa)). The segment at 1167–1564 (QEARQPSREA…GRRDTQLKLR (398 aa)) is adenylation 2. Residues 1700–1776 (PVSRGPELRL…ELARCTGEEP (77 aa)) form the Carrier 2 domain. Serine 1737 is modified (O-(pantetheine 4'-phosphoryl)serine). The condensation 2 stretch occupies residues 1845–2159 (FSFHGEVSVE…ILQHQNIDMD (315 aa)). Residues 2008–2027 (CTMPVKATPPTDSDDSRPSA) are disordered.

The protein belongs to the NRP synthetase family.

The catalysed reaction is L-proline + L-tryptophan + 2 ATP = brevianamide F + 2 AMP + 2 diphosphate + 2 H(+). The protein operates within alkaloid biosynthesis. Functionally, nonribisomal peptide synthetase; part of the gene cluster that mediates the biosynthesis of notoamide, a fungal indole alkaloid that belongs to a family of natural products containing a characteristic bicyclo[2.2.2]diazaoctane core. The first step of notoamide biosynthesis involves coupling of L-proline and L-tryptophan by the bimodular NRPS notE, to produce cyclo-L-tryptophan-L-proline called brevianamide F. The reverse prenyltransferase notF then acts as a deoxybrevianamide E synthase and converts brevianamide F to deoxybrevianamide E via reverse prenylation at C-2 of the indole ring leading to the bicyclo[2.2.2]diazaoctane core. Deoxybrevianamide E is further hydroxylated at C-6 of the indole ring, likely catalyzed by the cytochrome P450 monooxygenase notG, to yield 6-hydroxy-deoxybrevianamide E. 6-hydroxy-deoxybrevianamide E is a specific substrate of the prenyltransferase notC for normal prenylation at C-7 to produce 6-hydroxy-7-prenyl-deoxybrevianamide, also called notoamide S. As the proposed pivotal branching point in notoamide biosynthesis, notoamide S can be diverted to notoamide E through an oxidative pyran ring closure putatively catalyzed by either notH cytochrome P450 monooxygenase or the notD FAD-linked oxidoreductase. This step would be followed by an indole 2,3-epoxidation-initiated pinacol-like rearrangement catalyzed by the notB FAD-dependent monooxygenase leading to the formation of notoamide C and notoamide D. On the other hand notoamide S is converted to notoamide T by notH (or notD), a bifunctional oxidase that also functions as the intramolecular Diels-Alderase responsible for generation of (+)-notoamide T. To generate antipodal (-)-notoaminide T, notH' (or notD') in Aspergillus versicolor is expected to catalyze a Diels-Alder reaction leading to the opposite stereochemistry. The remaining oxidoreductase notD (or notH) likely catalyzes the oxidative pyran ring formation to yield (+)-stephacidin A. The FAD-dependent monooxygenase notI is highly similar to notB and is predicted to catalyze a similar conversion from (+)-stephacidin A to (-)-notoamide B via the 2,3-epoxidation of (+)-stephacidin A followed by a pinacol-type rearrangement. Finally, it remains unclear which enzyme could be responsible for the final hydroxylation steps leading to notoamide A and sclerotiamide. The chain is Nonribisomal peptide synthetase notE from Aspergillus sp. (strain MF297-2).